A 251-amino-acid chain; its full sequence is FHA domain-containing protein FHA1 (251 aa).

The 58-residue stretch at 32 to 89 (IILGRNSKKSTVDVDLSSLGGGMNISRNHARIFYDFTRRRFSLEVLGKNGCFVEGVLH) folds into the FHA domain. Residues 163–174 (EYDDEDDDEEED) are compositionally biased toward acidic residues. Residues 163–209 (EYDDEDDDEEEDIRGSGKKTWRDGHEGVYASGEKKREGRSKADREAD) form a disordered region. Residues 182–206 (TWRDGHEGVYASGEKKREGRSKADR) are compositionally biased toward basic and acidic residues.

In terms of tissue distribution, expressed in roots and vascular tissues near the shoot apex in young seedlings.

The protein localises to the nucleus. In terms of biological role, may play a role in the control of plant organ development. Does not show transactivation activity in yeast. The protein is FHA domain-containing protein FHA1 of Arabidopsis thaliana (Mouse-ear cress).